We begin with the raw amino-acid sequence, 327 residues long: Malate dehydrogenase (327 aa).

11–17 (GAAGQIS) contacts NAD(+). Positions 92 and 98 each coordinate substrate. Residues asparagine 105, glutamine 112, and 129-131 (VGN) each bind NAD(+). Positions 131 and 162 each coordinate substrate. Residue histidine 187 is the Proton acceptor of the active site.

It belongs to the LDH/MDH superfamily. MDH type 2 family.

The catalysed reaction is (S)-malate + NAD(+) = oxaloacetate + NADH + H(+). In terms of biological role, catalyzes the reversible oxidation of malate to oxaloacetate. This Cellvibrio japonicus (strain Ueda107) (Pseudomonas fluorescens subsp. cellulosa) protein is Malate dehydrogenase.